The sequence spans 204 residues: Protease (204 aa).

Active-site residues include H54, D71, and C121.

This sequence belongs to the peptidase C5 family. Interacts with protease cofactor pVI-C; this interaction is necessary for protease activation.

It is found in the virion. It localises to the host nucleus. It catalyses the reaction Cleaves proteins of the adenovirus and its host cell at two consensus sites: -Yaa-Xaa-Gly-Gly-|-Xaa- and -Yaa-Xaa-Gly-Xaa-|-Gly- (in which Yaa is Met, Ile or Leu, and Xaa is any amino acid).. With respect to regulation, requires DNA and protease cofactor for maximal activation. Inside nascent virions, becomes partially activated by binding to the viral DNA, allowing it to cleave the cofactor that binds to the protease and fully activates it. Actin, like the viral protease cofactor, seems to act as a cofactor in the cleavage of cytokeratin 18 and of actin itself. Cleaves viral precursor proteins (pTP, pIIIa, pVI, pVII, pVIII, and pX) inside newly assembled particles giving rise to mature virions. Protease complexed to its cofactor slides along the viral DNA to specifically locate and cleave the viral precursors. Mature virions have a weakened organization compared to the unmature virions, thereby facilitating subsequent uncoating. Without maturation, the particle lacks infectivity and is unable to uncoat. Late in adenovirus infection, in the cytoplasm, may participate in the cytoskeleton destruction. Cleaves host cell cytoskeletal keratins K7 and K18. This chain is Protease, found in Frog adenovirus 1 (strain ATCC VR-896) (FrAdV-1).